Here is a 293-residue protein sequence, read N- to C-terminus: 4-hydroxy-tetrahydrodipicolinate synthase (293 aa).

Position 45 (Thr45) interacts with pyruvate. Catalysis depends on Tyr133, which acts as the Proton donor/acceptor. The Schiff-base intermediate with substrate role is filled by Lys162. Pyruvate is bound at residue Ile204.

This sequence belongs to the DapA family. In terms of assembly, homotetramer; dimer of dimers.

The protein localises to the cytoplasm. It carries out the reaction L-aspartate 4-semialdehyde + pyruvate = (2S,4S)-4-hydroxy-2,3,4,5-tetrahydrodipicolinate + H2O + H(+). Its pathway is amino-acid biosynthesis; L-lysine biosynthesis via DAP pathway; (S)-tetrahydrodipicolinate from L-aspartate: step 3/4. Catalyzes the condensation of (S)-aspartate-beta-semialdehyde [(S)-ASA] and pyruvate to 4-hydroxy-tetrahydrodipicolinate (HTPA). This chain is 4-hydroxy-tetrahydrodipicolinate synthase, found in Chelativorans sp. (strain BNC1).